The chain runs to 150 residues: UPF0178 protein Shewana3_1627 (150 aa).

This sequence belongs to the UPF0178 family.

The chain is UPF0178 protein Shewana3_1627 from Shewanella sp. (strain ANA-3).